A 116-amino-acid polypeptide reads, in one-letter code: Large ribosomal subunit protein bL17 (116 aa).

It belongs to the bacterial ribosomal protein bL17 family. Part of the 50S ribosomal subunit. Contacts protein L32.

The chain is Large ribosomal subunit protein bL17 from Rippkaea orientalis (strain PCC 8801 / RF-1) (Cyanothece sp. (strain PCC 8801)).